We begin with the raw amino-acid sequence, 174 residues long: MAKYQCPDCEYIYDEVAGHPHEGFPPGTSWETIPEEWACPDCAVRDKADFVVIESGSASPASGAATPEVRTATTPPKAEASPQKSTGASTPSANNKAKAKAKAKPARAKSSKDSTGKETTFRKWICITCGHIYDEALGDETEGFAPGTLFEDIPDDWCCPDCGATKEDYVLHED.

The Rubredoxin-like 1 domain maps to 1 to 53 (MAKYQCPDCEYIYDEVAGHPHEGFPPGTSWETIPEEWACPDCAVRDKADFVVI). The Fe cation site is built by cysteine 6, cysteine 9, cysteine 39, and cysteine 42. Residues 56 to 65 (GSASPASGAA) are compositionally biased toward low complexity. Residues 56 to 115 (GSASPASGAATPEVRTATTPPKAEASPQKSTGASTPSANNKAKAKAKAKPARAKSSKDST) are disordered. The segment covering 97 to 109 (AKAKAKAKPARAK) has biased composition (basic residues). In terms of domain architecture, Rubredoxin-like 2 spans 121–172 (FRKWICITCGHIYDEALGDETEGFAPGTLFEDIPDDWCCPDCGATKEDYVLH). Residues cysteine 126, cysteine 129, cysteine 159, and cysteine 162 each coordinate Fe cation.

It belongs to the rubredoxin family. Fe(3+) is required as a cofactor.

The protein resides in the cytoplasm. It participates in hydrocarbon metabolism; alkane degradation. Its function is as follows. Involved in the hydrocarbon hydroxylating system, which transfers electrons from NADH to rubredoxin reductase and then through rubredoxin to alkane 1 monooxygenase. In Alcanivorax borkumensis (strain ATCC 700651 / DSM 11573 / NCIMB 13689 / SK2), this protein is Rubredoxin-2 (alkG).